The chain runs to 1322 residues: Sal-like protein 1 (1322 aa).

The segment at 1–41 (MSRRKQAKPQHFQSDPEVASLPRRDGDTEKGQPSRPTKSKD) is disordered. The span at 22–41 (PRRDGDTEKGQPSRPTKSKD) shows a compositional bias: basic and acidic residues. Residues 43 to 65 (HVCGRCCAEFFELSDLLLHKKSC) form a C2H2-type 1; atypical zinc finger. A disordered region spans residues 78–128 (PASPAKTFPPGPSLNDPDDQMKDAANKADQEDCSDLSEPKGLDREESMEVE). Basic and acidic residues-rich tracts occupy residues 96–107 (DQMKDAANKADQ) and 114–124 (SEPKGLDREES). Lys440 is covalently cross-linked (Glycyl lysine isopeptide (Lys-Gly) (interchain with G-Cter in SUMO2)). 2 C2H2-type zinc fingers span residues 450–472 (HKCR…LRSH) and 478–500 (FKCN…FQRH). The tract at residues 578-659 (PIPISHSAAS…GGPGGTTFTN (82 aa)) is disordered. Polar residues predominate over residues 584–594 (SAASPQGSVKS). Phosphoserine is present on residues Ser591, Ser594, and Ser596. The segment covering 629–645 (NMASSAVPTAGNSTLNS) has biased composition (polar residues). Residues Lys672, Lys689, and Lys700 each participate in a glycyl lysine isopeptide (Lys-Gly) (interchain with G-Cter in SUMO2) cross-link. C2H2-type zinc fingers lie at residues 705 to 727 (NECI…YRTH), 733 to 755 (FKCK…YSVH), and 765 to 787 (HSCP…IRMH). 2 disordered regions span residues 789 to 855 (GGQI…SSPL) and 891 to 961 (SMEG…GLSP). Residues 819 to 832 (DLDNFSDENMEECP) are compositionally biased toward acidic residues. Residues 842–855 (SADASQDSLSSSPL) are compositionally biased toward low complexity. Over residues 898-935 (TNDSSSVGGDMESQSAGSPAISESTSSMQALSPSNSTQ) the composition is skewed to polar residues. Over residues 936–948 (EFHKSPGMEEKPQ) the composition is skewed to basic and acidic residues. Residue Ser940 is modified to Phosphoserine. Residues Lys946 and Lys981 each participate in a glycyl lysine isopeptide (Lys-Gly) (interchain with G-Cter in SUMO2) cross-link. 2 consecutive C2H2-type zinc fingers follow at residues 1000 to 1022 (TACD…YRSH) and 1028 to 1050 (FICT…MLTH). Lys1085 participates in a covalent cross-link: Glycyl lysine isopeptide (Lys-Gly) (interchain with G-Cter in SUMO2). Residues 1094 to 1119 (VSPQDSKDAPTSHVPQGPLSSSATSP) form a disordered region. 2 consecutive C2H2-type zinc fingers follow at residues 1133–1155 (HYCN…ERTH) and 1161–1183 (FACT…MGTH). Residues Lys1218, Lys1297, and Lys1317 each participate in a glycyl lysine isopeptide (Lys-Gly) (interchain with G-Cter in SUMO2) cross-link.

It belongs to the sal C2H2-type zinc-finger protein family. As to quaternary structure, may associate with NuRD histone deacetylase complex (HDAC). Interacts with components of HDAC complex including HDAC1, HDAC2, RBBP4, RBPP7, MTA1 and MTA2. Interacts with CCNQ. Interacts with NSD2 (via PHD-type zinc fingers 1, 2 and 3). As to expression, expressed in the metanephric mesenchyme surrounding ureteric bud.

The protein localises to the nucleus. In terms of biological role, transcriptional repressor involved in organogenesis. Plays an essential role in ureteric bud invasion during kidney development. The protein is Sal-like protein 1 (Sall1) of Mus musculus (Mouse).